A 452-amino-acid chain; its full sequence is Protein henna (452 aa).

The ACT domain maps to 36–107 (FSPKDSSLSS…EQCSYFNIIS (72 aa)). S272 is subject to Phosphoserine; by CaMK2. Fe cation-binding residues include H284, H289, and E329.

It belongs to the biopterin-dependent aromatic amino acid hydroxylase family. Fe(2+) is required as a cofactor. As to expression, phenylalanine hydrolase activity is found in yolk granules of embryos, and female abdomen and fat body tissues. Tryptophan hydroxylase is expressed in serotonergic neurons. Both enzymes are present in cuticular tissues.

It carries out the reaction (6R)-L-erythro-5,6,7,8-tetrahydrobiopterin + L-phenylalanine + O2 = (4aS,6R)-4a-hydroxy-L-erythro-5,6,7,8-tetrahydrobiopterin + L-tyrosine. It catalyses the reaction (6R)-L-erythro-5,6,7,8-tetrahydrobiopterin + L-tryptophan + O2 = 5-hydroxy-L-tryptophan + (4aS,6R)-4a-hydroxy-L-erythro-5,6,7,8-tetrahydrobiopterin. It participates in amino-acid degradation; L-phenylalanine degradation; acetoacetate and fumarate from L-phenylalanine: step 1/6. N-terminal region of PAH is thought to contain allosteric binding sites for phenylalanine and to constitute an 'inhibitory' domain that regulates the activity of a catalytic domain in the C-terminal portion of the molecule. The protein is Protein henna (Hn) of Drosophila melanogaster (Fruit fly).